Consider the following 139-residue polypeptide: Nucleoside diphosphate kinase (139 aa).

Residues Lys-10, Phe-58, Arg-86, Thr-92, Arg-104, and Asn-114 each coordinate ATP. His-117 (pros-phosphohistidine intermediate) is an active-site residue.

Belongs to the NDK family. In terms of assembly, homotetramer. Requires Mg(2+) as cofactor.

The protein localises to the cytoplasm. It carries out the reaction a 2'-deoxyribonucleoside 5'-diphosphate + ATP = a 2'-deoxyribonucleoside 5'-triphosphate + ADP. It catalyses the reaction a ribonucleoside 5'-diphosphate + ATP = a ribonucleoside 5'-triphosphate + ADP. Its function is as follows. Major role in the synthesis of nucleoside triphosphates other than ATP. The ATP gamma phosphate is transferred to the NDP beta phosphate via a ping-pong mechanism, using a phosphorylated active-site intermediate. This is Nucleoside diphosphate kinase from Rhodococcus erythropolis (strain PR4 / NBRC 100887).